The sequence spans 215 residues: Cytochrome b6 (215 aa).

Residues 32-52 (IFYCLGGITLTCFLVQVATGF) form a helical membrane-spanning segment. Residue Cys-35 coordinates heme c. The heme b site is built by His-86 and His-100. Helical transmembrane passes span 90–110 (ASMM…TGGF), 116–136 (LTWV…VTGY), and 186–206 (LHTF…FSMI). 2 residues coordinate heme b: His-187 and His-202.

The protein belongs to the cytochrome b family. PetB subfamily. In terms of assembly, the 4 large subunits of the cytochrome b6-f complex are cytochrome b6, subunit IV (17 kDa polypeptide, PetD), cytochrome f and the Rieske protein, while the 4 small subunits are PetG, PetL, PetM and PetN. The complex functions as a dimer. Requires heme b as cofactor. Heme c serves as cofactor.

The protein resides in the plastid. It is found in the chloroplast thylakoid membrane. Component of the cytochrome b6-f complex, which mediates electron transfer between photosystem II (PSII) and photosystem I (PSI), cyclic electron flow around PSI, and state transitions. This chain is Cytochrome b6, found in Lotus japonicus (Lotus corniculatus var. japonicus).